Consider the following 61-residue polypeptide: uncharacterized protein (61 aa).

Positions 39–61 (PRPFTPGLADPRRLGPRRVQAAQ) are disordered.

This is an uncharacterized protein from Pan troglodytes (Chimpanzee).